The chain runs to 493 residues: GTPase Der (493 aa).

The EngA-type G 1 domain maps to 3–166 (PVIALVGRPN…EALGIFPKDN (164 aa)). GTP is bound by residues 9 to 16 (GRPNVGKS), 56 to 60 (DTGGI), and 118 to 121 (NKVD). Residues 167 to 184 (VEEEGEGEPASEEVAEGE) show a composition bias toward acidic residues. The interval 167–195 (VEEEGEGEPASEEVAEGEEPTRIPGPSEK) is disordered. An EngA-type G 2 domain is found at 198-371 (IKIAIIGRPN…SVQESFRSAV (174 aa)). GTP-binding positions include 204–211 (GRPNVGKS), 251–255 (DTAGV), and 316–319 (NKWD). Positions 372 to 456 (TRWPTSRLTS…PIRIEYKGGE (85 aa)) constitute a KH-like domain. The segment covering 454 to 463 (GGENPYEGKK) has biased composition (basic and acidic residues). The segment at 454–493 (GGENPYEGKKNSLTARQVNKKRRLMSHHKKAEKKKKDKRR) is disordered. The span at 471-493 (VNKKRRLMSHHKKAEKKKKDKRR) shows a compositional bias: basic residues.

It belongs to the TRAFAC class TrmE-Era-EngA-EngB-Septin-like GTPase superfamily. EngA (Der) GTPase family. Associates with the 50S ribosomal subunit.

Functionally, GTPase that plays an essential role in the late steps of ribosome biogenesis. The polypeptide is GTPase Der (Pseudomonas aeruginosa (strain LESB58)).